The following is a 166-amino-acid chain: MSTVELNTSAGRIVLELNDAEAPKTVENFLAYVRSGHYDGTIFHRVISDFMIQGGGFTPDMQQKSTLAPIQNEADNGLRNDNYTVAMARTNDPHSATAQFFINVKDNAFLNHTSKTPNGWGYAVFGRVTEGQDVVDAIKGVKTGSSRGHQDVPVQPVVIESAKILG.

The 163-residue stretch at 2-164 (STVELNTSAG…QPVVIESAKI (163 aa)) folds into the PPIase cyclophilin-type domain.

The protein belongs to the cyclophilin-type PPIase family. In terms of assembly, monomer.

Its subcellular location is the cytoplasm. The catalysed reaction is [protein]-peptidylproline (omega=180) = [protein]-peptidylproline (omega=0). With respect to regulation, inhibition by cyclosporin A with a Ki of 21 mu-mol. Its function is as follows. PPIases accelerate the folding of proteins. It catalyzes the cis-trans isomerization of proline imidic peptide bonds in oligopeptides. The sequence is that of Peptidyl-prolyl cis-trans isomerase cyp18 from Streptomyces antibioticus.